Here is a 362-residue protein sequence, read N- to C-terminus: Probable cinnamyl alcohol dehydrogenase 9 (362 aa).

C45 is a binding site for Zn(2+). Residue S47 participates in NADP(+) binding. Positions 67, 68, 98, 101, 104, 112, and 167 each coordinate Zn(2+). Residues T171, 192 to 197, 215 to 220, T255, G279, and 302 to 304 each bind NADP(+); these read GLGGLG, STSPWK, and SMI.

This sequence belongs to the zinc-containing alcohol dehydrogenase family. As to quaternary structure, homodimer. The cofactor is Zn(2+).

The enzyme catalyses (E)-cinnamyl alcohol + NADP(+) = (E)-cinnamaldehyde + NADPH + H(+). It carries out the reaction (E)-coniferol + NADP(+) = (E)-coniferaldehyde + NADPH + H(+). It catalyses the reaction (E)-sinapyl alcohol + NADP(+) = (E)-sinapaldehyde + NADPH + H(+). The catalysed reaction is (E)-4-coumaroyl alcohol + NADP(+) = (E)-4-coumaraldehyde + NADPH + H(+). The enzyme catalyses (E)-caffeyl alcohol + NADP(+) = (E)-caffeyl aldehyde + NADPH + H(+). It participates in aromatic compound metabolism; phenylpropanoid biosynthesis. In terms of biological role, involved in lignin biosynthesis. Catalyzes the final step specific for the production of lignin monomers. Catalyzes the NADPH-dependent reduction of coniferaldehyde, 5-hydroxyconiferaldehyde, sinapaldehyde, 4-coumaraldehyde and caffeyl aldehyde to their respective alcohols. The chain is Probable cinnamyl alcohol dehydrogenase 9 from Oryza sativa subsp. japonica (Rice).